A 380-amino-acid polypeptide reads, in one-letter code: MAIEMLGLILAGGQGTRLGKLTKDVAKPAVPFGGRYRIIDFALSNCANSNVKNVGVITQYQPLTLNAHIGNGAPWGLNGINRGVTILQPYFSQEGSKWFEGTSHAVYQNISYIDQQNPEYVLILSGDHIYKMDYEAMLESHKEREASLTVSVMEVPLEEASRFGIMNTDDNDRIIEFEEKPKEPKSNLASMGIYIFNWKRLREVLVNGYSKGNPMEDFGGDVIPAYIEAGENVFAYRFKGYWKDVGTIDSLHQSSMEFLDLNNELNITDKSWRIYSHNDISAPQFITEKSKVKNALVGDGCYVDGTVIHSILSQNVHVQEGTTIEDSFIMSGTFIGENVTIKNAIIGENAKIGDNVEIIGEDEVAVIGHGEIKGENKNEQ.

Alpha-D-glucose 1-phosphate contacts are provided by residues Gly164, 179 to 180 (EK), and Ser190.

It belongs to the bacterial/plant glucose-1-phosphate adenylyltransferase family. Homotetramer.

It carries out the reaction alpha-D-glucose 1-phosphate + ATP + H(+) = ADP-alpha-D-glucose + diphosphate. The protein operates within glycan biosynthesis; glycogen biosynthesis. Involved in the biosynthesis of ADP-glucose, a building block required for the elongation reactions to produce glycogen. Catalyzes the reaction between ATP and alpha-D-glucose 1-phosphate (G1P) to produce pyrophosphate and ADP-Glc. This Lactococcus lactis subsp. cremoris (strain MG1363) protein is Glucose-1-phosphate adenylyltransferase.